The primary structure comprises 179 residues: Large ribosomal subunit protein uL5 (179 aa).

This sequence belongs to the universal ribosomal protein uL5 family. In terms of assembly, part of the 50S ribosomal subunit; part of the 5S rRNA/L5/L18/L25 subcomplex. Contacts the 5S rRNA and the P site tRNA. Forms a bridge to the 30S subunit in the 70S ribosome.

This is one of the proteins that bind and probably mediate the attachment of the 5S RNA into the large ribosomal subunit, where it forms part of the central protuberance. In the 70S ribosome it contacts protein S13 of the 30S subunit (bridge B1b), connecting the 2 subunits; this bridge is implicated in subunit movement. Contacts the P site tRNA; the 5S rRNA and some of its associated proteins might help stabilize positioning of ribosome-bound tRNAs. The polypeptide is Large ribosomal subunit protein uL5 (Thioalkalivibrio sulfidiphilus (strain HL-EbGR7)).